Here is a 715-residue protein sequence, read N- to C-terminus: Eukaryotic peptide chain release factor GTP-binding subunit (715 aa).

The span at 1–12 shows a compositional bias: polar residues; sequence MANASLNGDQSK. Disordered regions lie at residues 1–148 and 168–262; these read MANA…SLNK and ATKK…SNSA. Residues 5 to 128 form a several sort of repeats region; that stretch reads SLNGDQSKQQ…PQQQQQQQSQ (124 aa). A compositionally biased stretch (low complexity) spans 13 to 25; the sequence is QQQQQQQQQQQQQ. Positions 26–37 are enriched in polar residues; the sequence is NYYNPNAAQSFV. Composition is skewed to low complexity over residues 39–129 and 176–198; these read QGGY…QSQG and SKPQ…ASAP. The interval 129–285 is charged; the sequence is GMSLADFQKQ…DEIDEEVVKD (157 aa). Composition is skewed to basic and acidic residues over residues 199–208 and 218–233; these read QEEKKEEKEA and ETKK…KKEA. Positions 290–515 constitute a tr-type G domain; that stretch reads KDHVSIIFMG…YLDNMDTMNR (226 aa). Residues 299-306 form a G1 region; that stretch reads GHVDAGKS. Residue 299–306 participates in GTP binding; the sequence is GHVDAGKS. Positions 355–359 are G2; that stretch reads GKTIE. At threonine 373 the chain carries Phosphothreonine. Residues 376-379 form a G3 region; sequence DAPG. Residues 376–380 and 438–441 each bind GTP; these read DAPGH and NKMD. Residues 438–441 form a G4 region; sequence NKMD. The tract at residues 479–481 is G5; that stretch reads SGY.

Belongs to the TRAFAC class translation factor GTPase superfamily. Classic translation factor GTPase family. ERF3 subfamily.

Its subcellular location is the cytoplasm. In terms of biological role, involved in translation termination. Stimulates the activity of ERF1. Binds guanine nucleotides. The sequence is that of Eukaryotic peptide chain release factor GTP-binding subunit (SUP35) from Candida albicans (Yeast).